The following is a 1019-amino-acid chain: Katanin p80 WD40 repeat-containing subunit B1 homolog KTN80.1 (1019 aa).

7 WD repeats span residues 13–53, 56–95, 98–137, 140–181, 183–221, 224–264, and 266–303; these read AHSG…SPMS, GHTSPVDSVAFNSEEVLVLAGASSGVIKLWDLEESKMVRA, GHRSNCSAVEFHPFGEFLASGSSDTNLRVWDTRKKGCIQT, GHTR…HEFK, HEGPIRSLDFHPLEFLLATGSADRTVKFWDLETFELIGT, PEAT…DGVD, and GWSTLGDFCINEGKFIGCSYYRNSVGIWVSDISELEPY. A DWD box motif is present at residues 114–130; it reads FLASGSSDTNLRVWDTR. 4 disordered regions span residues 388–424, 455–474, 517–581, and 607–652; these read FGPAGDKYSSTSRDSDSGEESSYSERESIPFSRTKSG, KSGLAVEEEPQTQNAFLSEQ, IHRS…GSRE, and RGEK…RARS. The span at 465 to 474 shows a compositional bias: polar residues; it reads QTQNAFLSEQ. Residues 553-572 show a composition bias toward basic and acidic residues; the sequence is IPSKTERVLSREKPGDEQKN. The span at 614-628 shows a compositional bias: polar residues; it reads TEGASTTIEQNNNAV.

The protein belongs to the WD repeat KATNB1 family. As to quaternary structure, component of KTN80-KTN1 complexes composed of a hexamer of KTN1-KTN80 heterodimers that sense microtubule (MT) geometry to confer precise MT severing. Interacts directly with AAA1/KTN1 and KTN80.3, and weakly with KTN80.4. In terms of tissue distribution, expressed at low levels in siliques, flowers, leaves, stems and roots.

It is found in the cytoplasm. The protein resides in the cytoskeleton. May participate in a complex which severs microtubules in an ATP-dependent manner. Microtubule severing may promote rapid reorganization of cellular microtubule arrays. Confers precision to microtubule (MT) severing by specific targeting of KTN1 to MT cleavage sites such as crossover or branching nucleation sites. Together with other KTN80s, regulates cell elongation by modulating MT organization. The chain is Katanin p80 WD40 repeat-containing subunit B1 homolog KTN80.1 from Arabidopsis thaliana (Mouse-ear cress).